Here is a 190-residue protein sequence, read N- to C-terminus: FMRFamide-related peptides (190 aa).

A signal peptide spans 1 to 21 (MSCSRTVALLAALWLVVGATS). A propeptide spanning residues 22 to 33 (SPVRRSPDLEAR) is cleaved from the precursor. At Phe-45 the chain carries Phenylalanine amide. Positions 69–104 (GNSFLRFGRSQPLTLSTDDLVSLLRAYEEDYDTPMT) are excised as a propeptide. Residue Phe-113 is modified to Phenylalanine amide. A propeptide spanning residues 116–150 (DPNFIRLGRSADDDKSAFEQNSELVVSGYPQRKSR) is cleaved from the precursor. Leu-158 is modified (leucine amide). Residues 160–190 (RDSEEVNENEFEETEESRRKRSADSCHDCQS) constitute a propeptide that is removed on maturation. The interval 161–190 (DSEEVNENEFEETEESRRKRSADSCHDCQS) is disordered. Residues 164-174 (EVNENEFEETE) are compositionally biased toward acidic residues. A compositionally biased stretch (basic and acidic residues) spans 175 to 190 (ESRRKRSADSCHDCQS).

The protein belongs to the FARP (FMRFamide related peptide) family. As to expression, RFamide 1: Expressed in corpora cardiaca (CC), corpora allata (CA), antennal lobe (AL) and gnathal ganglion (GNG) (at protein level). Expression in AL detected in most animals, in CC, CA and in GNG in some animals (at protein level). RFamide precursor-related peptide 2: Expressed in corpora cardiaca (CC), corpora allata (CA), antennal lobe (AL) and gnathal ganglion (GNG) (at protein level). Expression in AL detected in some animals, expression in CC, CA and GNG in few animals (at protein level). RFamide 3: Expressed in corpora cardiaca (CC), corpora allata (CA), antennal lobe (AL) and gnathal ganglion (GNG) (at protein level). Expression in AL detected in all animals, in CC, CA and GNG in most animals (at protein level). RFamide 5: Expressed in corpora cardiaca (CC), corpora allata (CA), antennal lobe (AL) and gnathal ganglion (GNG) (at protein level). Expression in AL detected in all animals, in CC, CA and in GNG in some animals (at protein level).

Its subcellular location is the secreted. In terms of biological role, in insects, FMRFamide and related peptides have modulatory actions at skeletal neuromuscular junctions, and peptides that are immunologically related to FMRFamide are released into the circulation from neurohemal organs. The polypeptide is FMRFamide-related peptides (Agrotis ipsilon (Black cutworm moth)).